Reading from the N-terminus, the 244-residue chain is tRNA pseudouridine synthase A (244 aa).

Aspartate 52 functions as the Nucleophile in the catalytic mechanism. A substrate-binding site is contributed by tyrosine 110.

The protein belongs to the tRNA pseudouridine synthase TruA family. Homodimer.

It carries out the reaction uridine(38/39/40) in tRNA = pseudouridine(38/39/40) in tRNA. Functionally, formation of pseudouridine at positions 38, 39 and 40 in the anticodon stem and loop of transfer RNAs. The chain is tRNA pseudouridine synthase A from Clostridium kluyveri (strain ATCC 8527 / DSM 555 / NBRC 12016 / NCIMB 10680 / K1).